The chain runs to 396 residues: CCA-adding enzyme (396 aa).

Residues glycine 27 and arginine 30 each contribute to the ATP site. Glycine 27 and arginine 30 together coordinate CTP. 2 residues coordinate Mg(2+): aspartate 40 and aspartate 42. ATP-binding residues include arginine 111, aspartate 154, arginine 157, arginine 160, and arginine 163. CTP is bound by residues arginine 111, aspartate 154, arginine 157, arginine 160, and arginine 163.

The protein belongs to the tRNA nucleotidyltransferase/poly(A) polymerase family. Bacterial CCA-adding enzyme type 3 subfamily. Homodimer. It depends on Mg(2+) as a cofactor.

The catalysed reaction is a tRNA precursor + 2 CTP + ATP = a tRNA with a 3' CCA end + 3 diphosphate. The enzyme catalyses a tRNA with a 3' CCA end + 2 CTP + ATP = a tRNA with a 3' CCACCA end + 3 diphosphate. Its function is as follows. Catalyzes the addition and repair of the essential 3'-terminal CCA sequence in tRNAs without using a nucleic acid template. Adds these three nucleotides in the order of C, C, and A to the tRNA nucleotide-73, using CTP and ATP as substrates and producing inorganic pyrophosphate. tRNA 3'-terminal CCA addition is required both for tRNA processing and repair. Also involved in tRNA surveillance by mediating tandem CCA addition to generate a CCACCA at the 3' terminus of unstable tRNAs. While stable tRNAs receive only 3'-terminal CCA, unstable tRNAs are marked with CCACCA and rapidly degraded. In Pediococcus pentosaceus (strain ATCC 25745 / CCUG 21536 / LMG 10740 / 183-1w), this protein is CCA-adding enzyme.